The sequence spans 292 residues: 2,3-dihydroxybenzoate decarboxylase (292 aa).

The active site involves C263.

The protein belongs to the metallo-dependent hydrolases superfamily. As to quaternary structure, homotetramer.

The enzyme catalyses 2,3-dihydroxybenzoate + H(+) = catechol + CO2. It functions in the pathway aromatic compound metabolism; benzoate degradation via hydroxylation. In Aspergillus niger, this protein is 2,3-dihydroxybenzoate decarboxylase.